The following is a 436-amino-acid chain: Trigger factor (436 aa).

Residues 162-247 enclose the PPIase FKBP-type domain; that stretch reads GDRVIIDFEG…LNNVSEPTLP (86 aa).

Belongs to the FKBP-type PPIase family. Tig subfamily.

The protein localises to the cytoplasm. The enzyme catalyses [protein]-peptidylproline (omega=180) = [protein]-peptidylproline (omega=0). Functionally, involved in protein export. Acts as a chaperone by maintaining the newly synthesized protein in an open conformation. Functions as a peptidyl-prolyl cis-trans isomerase. In Neisseria gonorrhoeae (strain ATCC 700825 / FA 1090), this protein is Trigger factor.